A 328-amino-acid chain; its full sequence is Glycerol-3-phosphate dehydrogenase [NAD(P)+] (328 aa).

Tryptophan 15, arginine 35, arginine 36, and lysine 105 together coordinate NADPH. Positions 105 and 131 each coordinate sn-glycerol 3-phosphate. Alanine 135 lines the NADPH pocket. The sn-glycerol 3-phosphate site is built by lysine 186, aspartate 239, serine 249, arginine 250, and asparagine 251. Residue lysine 186 is the Proton acceptor of the active site. Arginine 250 is a binding site for NADPH. NADPH is bound by residues valine 270 and glutamate 272.

The protein belongs to the NAD-dependent glycerol-3-phosphate dehydrogenase family.

The protein localises to the cytoplasm. It catalyses the reaction sn-glycerol 3-phosphate + NAD(+) = dihydroxyacetone phosphate + NADH + H(+). It carries out the reaction sn-glycerol 3-phosphate + NADP(+) = dihydroxyacetone phosphate + NADPH + H(+). It participates in membrane lipid metabolism; glycerophospholipid metabolism. Catalyzes the reduction of the glycolytic intermediate dihydroxyacetone phosphate (DHAP) to sn-glycerol 3-phosphate (G3P), the key precursor for phospholipid synthesis. In Deinococcus radiodurans (strain ATCC 13939 / DSM 20539 / JCM 16871 / CCUG 27074 / LMG 4051 / NBRC 15346 / NCIMB 9279 / VKM B-1422 / R1), this protein is Glycerol-3-phosphate dehydrogenase [NAD(P)+].